A 1116-amino-acid chain; its full sequence is Error-prone DNA polymerase 1 (1116 aa).

Belongs to the DNA polymerase type-C family. DnaE2 subfamily.

It is found in the cytoplasm. It carries out the reaction DNA(n) + a 2'-deoxyribonucleoside 5'-triphosphate = DNA(n+1) + diphosphate. In terms of biological role, DNA polymerase involved in damage-induced mutagenesis and translesion synthesis (TLS). It is not the major replicative DNA polymerase. In Rhizobium meliloti (strain 1021) (Ensifer meliloti), this protein is Error-prone DNA polymerase 1.